The following is a 2211-amino-acid chain: Activating signal cointegrator 1 complex subunit 3 (2211 aa).

Residues 495–678 form the Helicase ATP-binding 1 domain; the sequence is ETAYNTNENM…FLHVNPYIGL (184 aa). 508-515 lines the ATP pocket; that stretch reads APTGAGKT. Residues 620-623 carry the DEVH box motif; it reads DEVH. Residues 717–923 enclose the Helicase C-terminal 1 domain; it reads VLKQIMAGHQ…GTVTNVEEAV (207 aa). The SEC63 1 domain maps to 987–1296; it reads STDLGRTASH…GAEAVCIINF (310 aa). Residues 1345–1520 enclose the Helicase ATP-binding 2 domain; the sequence is HTLYHTDCNV…WLNINQMGLF (176 aa). ATP is bound at residue 1358–1365; that stretch reads APTGSGKT. Residues 1462–1465 carry the DEIH box motif; the sequence is DEIH. The 208-residue stretch at 1553-1760 folds into the Helicase C-terminal 2 domain; sequence PAFQAIRSHS…GTITSKQDAM (208 aa). One can recognise an SEC63 2 domain in the interval 1821–2184; it reads PLTYGRIASY…YLGMDQQYDI (364 aa).

It belongs to the helicase family.

The protein resides in the nucleus. The protein localises to the nucleus speckle. It is found in the cytoplasm. Its subcellular location is the cytosol. The catalysed reaction is Couples ATP hydrolysis with the unwinding of duplex DNA by translocating in the 3'-5' direction.. It catalyses the reaction ATP + H2O = ADP + phosphate + H(+). 3'-5' DNA helicase involved in repair of alkylated DNA. Promotes DNA unwinding to generate single-stranded substrate needed for ALKBH3, enabling ALKBH3 to process alkylated N3-methylcytosine (3mC) within double-stranded regions. Also involved in activation of the ribosome quality control (RQC) pathway, a pathway that degrades nascent peptide chains during problematic translation. Drives the splitting of stalled ribosomes. The sequence is that of Activating signal cointegrator 1 complex subunit 3 (ascc3) from Gallus gallus (Chicken).